We begin with the raw amino-acid sequence, 180 residues long: MYQKDNASLQIDLVFKCNDFSNLSDPFLYQPGNLIFESSFWEEVLLCWINIILSEKNTSFPNFIFDKKIFSLSLQIINNNEISSINQKWMDKSGPTDVLSFPMISDEDTTKNLNFIELGDLFISLEMAFQQSLEFDHSIKKEMLWLASHGFLHLLGWEHNDDNELDNMLNFQEYLISKLD.

Residues histidine 149, histidine 153, and histidine 159 each coordinate Zn(2+).

Belongs to the endoribonuclease YbeY family. Zn(2+) is required as a cofactor.

Its subcellular location is the cytoplasm. Functionally, single strand-specific metallo-endoribonuclease involved in late-stage 70S ribosome quality control and in maturation of the 3' terminus of the 16S rRNA. This chain is Endoribonuclease YbeY, found in Prochlorococcus marinus (strain MIT 9515).